The sequence spans 247 residues: ATP synthase subunit a, chloroplastic (247 aa).

5 helical membrane passes run 38-58 (QVLI…AIAV), 95-115 (VPFI…GALL), 134-154 (INTT…AGLT), 199-219 (LVVV…VMFL), and 220-240 (GLFT…AYIG).

It belongs to the ATPase A chain family. F-type ATPases have 2 components, CF(1) - the catalytic core - and CF(0) - the membrane proton channel. CF(1) has five subunits: alpha(3), beta(3), gamma(1), delta(1), epsilon(1). CF(0) has four main subunits: a, b, b' and c.

The protein localises to the plastid. The protein resides in the chloroplast thylakoid membrane. Key component of the proton channel; it plays a direct role in the translocation of protons across the membrane. The chain is ATP synthase subunit a, chloroplastic from Illicium oligandrum (Star anise).